We begin with the raw amino-acid sequence, 292 residues long: Ribosomal protein L11 methyltransferase (292 aa).

S-adenosyl-L-methionine-binding residues include threonine 145, glycine 166, aspartate 188, and asparagine 229.

It belongs to the methyltransferase superfamily. PrmA family.

It is found in the cytoplasm. It catalyses the reaction L-lysyl-[protein] + 3 S-adenosyl-L-methionine = N(6),N(6),N(6)-trimethyl-L-lysyl-[protein] + 3 S-adenosyl-L-homocysteine + 3 H(+). Methylates ribosomal protein L11. This Alteromonas mediterranea (strain DSM 17117 / CIP 110805 / LMG 28347 / Deep ecotype) protein is Ribosomal protein L11 methyltransferase.